A 538-amino-acid polypeptide reads, in one-letter code: Casein kinase I homolog 1 (538 aa).

The disordered stretch occupies residues 39–61 (SPARSSMTATTAANSNSNSSRDD). Residues 41-57 (ARSSMTATTAANSNSNS) are compositionally biased toward low complexity. Residues 69–353 (YKIGKKIGEG…ETADGQYDWM (285 aa)) form the Protein kinase domain. Residues 75-83 (IGEGSFGVL) and K98 contribute to the ATP site. D188 acts as the Proton acceptor in catalysis. Disordered regions lie at residues 366-428 (NKKP…KPKL) and 474-527 (QQQL…LAAS). 2 stretches are compositionally biased toward low complexity: residues 391-410 (QLQM…QQQQ) and 474-498 (QQQL…QFGA). Phosphoserine occurs at positions 522, 523, and 527. 2 S-palmitoyl cysteine lipidation sites follow: C537 and C538.

Belongs to the protein kinase superfamily. CK1 Ser/Thr protein kinase family. Casein kinase I subfamily. In terms of processing, palmitoylated by AKR1.

It is found in the cell membrane. It localises to the mitochondrion membrane. The enzyme catalyses L-seryl-[protein] + ATP = O-phospho-L-seryl-[protein] + ADP + H(+). It catalyses the reaction L-threonyl-[protein] + ATP = O-phospho-L-threonyl-[protein] + ADP + H(+). Functionally, casein kinases are operationally defined by their preferential utilization of acidic proteins such as caseins as substrates. This is Casein kinase I homolog 1 (YCK1) from Saccharomyces cerevisiae (strain ATCC 204508 / S288c) (Baker's yeast).